Here is a 260-residue protein sequence, read N- to C-terminus: Carbonic anhydrase 2 (260 aa).

Position 2 is an N-acetylserine (S2). The residue at position 2 (S2) is a Phosphoserine. Residues H3 to F259 form the Alpha-carbonic anhydrase domain. H64 acts as the Proton acceptor in catalysis. N67 is a catalytic residue. At S87 the chain carries Phosphoserine. The Zn(2+) site is built by H94, H96, and H119. The active site involves Y127. Position 165 is a phosphoserine (S165). Residue T198–T199 participates in substrate binding.

This sequence belongs to the alpha-carbonic anhydrase family. Interacts with SLC4A4. Interaction with SLC4A7 regulates SLC4A7 transporter activity. Interacts with SLC26A6. Zn(2+) serves as cofactor.

The protein resides in the cytoplasm. The protein localises to the cell membrane. The enzyme catalyses hydrogencarbonate + H(+) = CO2 + H2O. It carries out the reaction urea = cyanamide + H2O. Inhibited by acetazolamide. Functionally, catalyzes the reversible hydration of carbon dioxide. Can also hydrate cyanamide to urea. Involved in the regulation of fluid secretion into the anterior chamber of the eye. Essential for bone resorption and osteoclast differentiation. Contributes to intracellular pH regulation in the duodenal upper villous epithelium during proton-coupled peptide absorption. Stimulates the chloride-bicarbonate exchange activity of SLC26A6. This chain is Carbonic anhydrase 2 (Ca2), found in Mus musculus (Mouse).